The following is a 349-amino-acid chain: Peroxisomal acyl-coenzyme A thioester hydrolase 1 (349 aa).

Residues D259, S282, and Q333 each act as charge relay system in the active site. The Microbody targeting signal motif lies at 347-349 (AKF).

It belongs to the C/M/P thioester hydrolase family.

The protein localises to the peroxisome. The enzyme catalyses hexadecanoyl-CoA + H2O = hexadecanoate + CoA + H(+). In terms of biological role, acyl-coenzyme A (acyl-CoA) thioesterases are a group of enzymes that catalyze the hydrolysis of acyl-CoAs to the free fatty acid and coenzyme A (CoASH), providing the potential to regulate intracellular levels of acyl-CoAs, free fatty acids and CoASH. Contributes to growth on fatty acids. The protein is Peroxisomal acyl-coenzyme A thioester hydrolase 1 (TES1) of Saccharomyces cerevisiae (strain ATCC 204508 / S288c) (Baker's yeast).